Here is a 515-residue protein sequence, read N- to C-terminus: Bifunctional purine biosynthesis protein PurH (515 aa).

The region spanning 1 to 145 is the MGS-like domain; sequence MTKRALISVS…KNHASVTVVV (145 aa).

It belongs to the PurH family.

The catalysed reaction is (6R)-10-formyltetrahydrofolate + 5-amino-1-(5-phospho-beta-D-ribosyl)imidazole-4-carboxamide = 5-formamido-1-(5-phospho-D-ribosyl)imidazole-4-carboxamide + (6S)-5,6,7,8-tetrahydrofolate. It catalyses the reaction IMP + H2O = 5-formamido-1-(5-phospho-D-ribosyl)imidazole-4-carboxamide. The protein operates within purine metabolism; IMP biosynthesis via de novo pathway; 5-formamido-1-(5-phospho-D-ribosyl)imidazole-4-carboxamide from 5-amino-1-(5-phospho-D-ribosyl)imidazole-4-carboxamide (10-formyl THF route): step 1/1. It participates in purine metabolism; IMP biosynthesis via de novo pathway; IMP from 5-formamido-1-(5-phospho-D-ribosyl)imidazole-4-carboxamide: step 1/1. The protein is Bifunctional purine biosynthesis protein PurH of Streptococcus suis (strain 98HAH33).